Here is a 521-residue protein sequence, read N- to C-terminus: Cytoplasmic polyadenylation element-binding protein 2 (521 aa).

Residues 1–11 (MNLPQQQPPAA) show a composition bias toward pro residues. 2 disordered regions span residues 1 to 35 (MNLPQQQPPAAAPQQPQSRRSPVSPQLQQQHQAAA) and 50 to 88 (PLLKQSPWSNHQNSGWGTASMSWGAMHGRDHRRSGNMGI). The segment covering 12–35 (APQQPQSRRSPVSPQLQQQHQAAA) has biased composition (low complexity). Ser-21 is modified (phosphoserine). A compositionally biased stretch (polar residues) spans 55–70 (SPWSNHQNSGWGTASM). RRM domains follow at residues 264-355 (RKVF…PWNL) and 372-454 (KTIF…PYVL).

This sequence belongs to the RRM CPEB family. Interacts with TENT2/GLD2. In terms of tissue distribution, expressed in embryo, cerebellum, salivary gland, thymus, heart, liver, lung, spleen, kidney, intestine, ovary and round spermatids. Weakly expressed in granular cells of dentate gyrus and the pyramidal cells of CA3 and CA1 of the hippocampus.

Its subcellular location is the cytoplasm. Its function is as follows. May play a role in translational regulation of stored mRNAs in transcriptionally inactive haploid spermatids. Binds to poly(U) RNA oligomers. Required for cell cycle progression, specifically for the transition from metaphase to anaphase. The polypeptide is Cytoplasmic polyadenylation element-binding protein 2 (Cpeb2) (Mus musculus (Mouse)).